The following is a 2266-amino-acid chain: MRDLRAQVTSGLLPFPEVTLQALGEDEITLESVLRGKFAAGKNGLACLACGPQLEVVNSITGERLSAYRFSGVNEQPPVVLAVKEFSWQKRTGLLIGLEETEGSVLCLYDLGISKVVKAVVLPGRVTAIEPIINHGGASASTQHLHPSLRWLFGVAAVVTDVGQILLVDLCLDDLSCNQNEVEASDLEVLTGIPAEVPHIRESVMRQGRHLCFQLVSPTGTAVSTLSYISRTNQLAVGFSDGYLALWNMKSMKREYYIQLESGQVPVYAVTFQEPENDPRNCCYLWAVQSTQDSEGDVLSLHLLQLAFGNRKCLASGQILYEGLEYCEERYTLDLTGGMFPLRGQTSNTKLLGCQSIEKFRSHGDREEGVNEALSPDTSVSVFTWQVNIYGQGKPSVYLGLFDINRWYHAQMPDSLRSGEYLHNCSYFALWSLESVVSRTSPHGILDILVHERSLNRGVPPSYPPPEQFFNPSTYNFDATCLLNSGVVHLTCTGFQKETLTFLKKSGPSLNELIPDGYNRCLVAGLLSPRFVDVQPSSLSQEEQLEAILSAAIQTSSLGLLTGYIRRWITEEQPNSATNLRFVLEWTWNKVVLTKEEFDRLCVPLFDGSCHFMDPQTIQSIQQCYLLLSNLNIVLSCFASEAREITERGLIDLSNKFVVSHLICQYAQVVLWFSHSGLLPEGIDDSVQLSRLCYNYPVIQNYYTSRRQKFERLSRGKWNPDCLMIDGLVSQLGERIEKLWKRDEGGTGKYPPASLHAVLDMYLLDGVTEAAKHSITIYLLLDIMYSFPNKTDTPIESFPTVFAISWGQVKLIQGFWLIDHNDYESGLDLLFHPATAKPLSWQHSKIIQAFMSQGEHRQALRYIQTMKPTVSSGNDVILHLTVLLFNRCMVEAWNFLRQHCNRLNIEELLKHMYEVCQEMGLMEDLLKLPFTDTEQECLVKFLQSSASVQNHEFLLVHHLQRANYVPALKLNQTLKINVMNDRDPRLRERSLARNSILDQYGKILPRVHRKLAIERAKPYHLSTSSVFRLVSRPKPLSAVPKQVVTGTVLTRSVFINNVLSKIGEVWASKEPINSTTPFNSSKIEEPSPIVYSLPAPELPEAFFGTPISKASQKISRLLDLVVQPVPRPSQCSEFIQQSSMKSPLYLVSRSLPSSSQLKGSPQAISRASELHLLETPLVVKKAKSLAMSVTTSGFSEFTPQSILRSTLRSTPLASPSPSPGRSPQRLKETRISFVEEDVHPKWIPGAADDSKLEVFTTPKKCAVPVETEWLKSKDRTTSFFLNSPEKEHQEMDEGSQSLEKLDVSKGNSSVSITSDETTLEYQDAPSPEDLEETVFTASKPKSSSTALTTNVTEQTEKDGDKDVFASEVTPSDLQKQMGNLEDAETKDLLVAAEAFSELNHLSPVQGTEASLCAPSVYEGKIFTQKSKVPVLDEGLTSVETYTPAIRANDNKSMADVLGDGGNSSLTISEGPIVSERRLNQEVALNLKEDHEVEVGVLKESVDLPEEKLPISDSPPDTQEIHVIEQEKLEAQDSGEEARNLSFNELYPSGTLKLQYNFDTIDQQFCDLADNKDTAECDIAEVDGELFVAQSNFTLILEGEEGEVEPGDFASSDVLPKAANTATEEKLVCSGENDNHGQIANLPSAVTSDQKSQKVDTLPYVPEPIKVAIAENLLDVIKDTRSKEITSDTMEQSIHETIPLVSQNIMCPTKLVKSAFKTAQETSTMTMNVSQVDDVVSSKTRTRGQRIQNVNVKSAQQEASADVATPKMPGQSVRKKTRKAKEISEASENIYSDVRGLSQNQQIPQNSVTPRRGRRKKEVNQDILENTSSVEQELQITTGRESKRLKSSQLLEPAVEETTKKEVKVSSVTKRTPRRIKRSVENQESVEIINDLKVSTVTSPSRMIRKLRSTNLDASENTGNKQDDKSSDKQLRIKHVRRVRGREVSPSDVREDSNLESSQLTVQAEFDMSAIPRKRGRPRKINPSEDVGSKAVKEERSPKKKEAPSIRRRSTRNTPAKSENVDVGKPALGKSILVPNEELSMVMSSKKKLTKKTESQSQKRSLHSVSEERTDEMTHKETNEQEERLLATASFTKSSRSSRTRSSKAILLPDLSEPNNEPLFSPASEVPRKAKAKKIEVPAQLKELVSDLSSQFVISPPALRSRQKNTSNKNKLEDELKDDAQSVETLGKPKAKRIRTSKTKQASKNTEKESAWSPPPIEIRLISPLASPADGVKSKPRKTTEVTGTGLGRNRKKLSSYPKQILRRKML.

The interval 1–494 (MRDLRAQVTS…SGVVHLTCTG (494 aa)) is seven-bladed beta propeller repeats. The interval 1–981 (MRDLRAQVTS…QTLKINVMND (981 aa)) is necessary for cytoplasmic localization. Phosphoserine is present on residues S509, S528, S1080, S1138, S1142, S1150, S1153, S1155, and S1160. The important for nuclear localization stretch occupies residues 591–1092 (VVLTKEEFDR…IEEPSPIVYS (502 aa)). The disordered stretch occupies residues 1019–2266 (YHLSTSSVFR…PKQILRRKML (1248 aa)). Positions 1149 to 2266 (RSLPSSSQLK…PKQILRRKML (1118 aa)) are necessary for nuclear localization. Position 1175 is a phosphothreonine (T1175). Phosphoserine occurs at positions 1214, 1218, 1222, 1232, and 1250. T1257 bears the Phosphothreonine mark. Residues S1283 and S1297 each carry the phosphoserine modification. Polar residues-rich tracts occupy residues 1305–1320 (KGNS…TTLE) and 1335–1353 (FTAS…NVTE). T1369 carries the phosphothreonine modification. A phosphoserine mark is found at S1371 and S1513. The mediates transcriptional activity stretch occupies residues 1446 to 1698 (RANDNKSMAD…MEQSIHETIP (253 aa)). T1517 carries the post-translational modification Phosphothreonine. 4 positions are modified to phosphoserine: S1533, S1541, S1729, and S1806. Composition is skewed to polar residues over residues 1796–1808 (LSQN…NSVT) and 1822–1838 (ILEN…ITTG). At T1808 the chain carries Phosphothreonine. Positions 1842-2266 (KRLKSSQLLE…PKQILRRKML (425 aa)) are important for nuclear localization and chromatin binding. A phosphoserine mark is found at S1878, S1884, and S1898. Residues 1908-1919 (STNLDASENTGN) show a composition bias toward polar residues. Composition is skewed to basic and acidic residues over residues 1920-1930 (KQDDKSSDKQL) and 1940-1952 (GREV…REDS). A phosphoserine mark is found at S1944 and S1946. Positions 1971-1983 (PRKRGRPRKINPS) form a DNA-binding region, a.T hook. A compositionally biased stretch (basic and acidic residues) spans 1986–2004 (VGSKAVKEERSPKKKEAPS). S1996, S2043, S2044, and S2060 each carry phosphoserine. Over residues 2064-2084 (VSEERTDEMTHKETNEQEERL) the composition is skewed to basic and acidic residues. 4 positions are modified to phosphoserine: S2089, S2120, S2123, and S2154. The span at 2169–2179 (NKLEDELKDDA) shows a compositional bias: basic and acidic residues. Residues 2188 to 2197 (PKAKRIRTSK) show a composition bias toward basic residues. Phosphoserine occurs at positions 2212, 2222, and 2226.

Belongs to the ELYS family. Associates with the Nup107-160 subcomplex of the NPC.

Its subcellular location is the cytoplasm. The protein localises to the nucleus. The protein resides in the nucleus envelope. It localises to the nucleus matrix. It is found in the chromosome. Its subcellular location is the centromere. The protein localises to the kinetochore. The protein resides in the nucleoplasm. It localises to the nuclear pore complex. In terms of biological role, required for the assembly of a functional nuclear pore complex (NPC) on the surface of chromosomes as nuclei form at the end of mitosis. May initiate NPC assembly by binding to chromatin and recruiting the Nup107-160 subcomplex of the NPC. Also required for the localization of the Nup107-160 subcomplex of the NPC to the kinetochore during mitosis and for the completion of cytokinesis. This Homo sapiens (Human) protein is Protein ELYS (AHCTF1).